The following is a 616-amino-acid chain: Chaperone protein HscA (616 aa).

It belongs to the heat shock protein 70 family.

Functionally, chaperone involved in the maturation of iron-sulfur cluster-containing proteins. Has a low intrinsic ATPase activity which is markedly stimulated by HscB. Involved in the maturation of IscU. This chain is Chaperone protein HscA, found in Salmonella enteritidis PT4 (strain P125109).